Here is a 403-residue protein sequence, read N- to C-terminus: Phosphoglycerate kinase (403 aa).

Residues 21-23, R36, 59-62, R119, and R154 each bind substrate; these read DFN and HLGR. Residues K207, G299, E330, and 357–360 each bind ATP; that span reads GGDA.

The protein belongs to the phosphoglycerate kinase family. In terms of assembly, monomer.

It is found in the cytoplasm. The enzyme catalyses (2R)-3-phosphoglycerate + ATP = (2R)-3-phospho-glyceroyl phosphate + ADP. It participates in carbohydrate degradation; glycolysis; pyruvate from D-glyceraldehyde 3-phosphate: step 2/5. The chain is Phosphoglycerate kinase from Chlamydia abortus (strain DSM 27085 / S26/3) (Chlamydophila abortus).